The following is a 351-amino-acid chain: UDP-3-O-acylglucosamine N-acyltransferase (351 aa).

His240 serves as the catalytic Proton acceptor.

Belongs to the transferase hexapeptide repeat family. LpxD subfamily. Homotrimer.

It carries out the reaction a UDP-3-O-[(3R)-3-hydroxyacyl]-alpha-D-glucosamine + a (3R)-hydroxyacyl-[ACP] = a UDP-2-N,3-O-bis[(3R)-3-hydroxyacyl]-alpha-D-glucosamine + holo-[ACP] + H(+). It participates in bacterial outer membrane biogenesis; LPS lipid A biosynthesis. Catalyzes the N-acylation of UDP-3-O-acylglucosamine using 3-hydroxyacyl-ACP as the acyl donor. Is involved in the biosynthesis of lipid A, a phosphorylated glycolipid that anchors the lipopolysaccharide to the outer membrane of the cell. The polypeptide is UDP-3-O-acylglucosamine N-acyltransferase (Pseudomonas putida (strain ATCC 700007 / DSM 6899 / JCM 31910 / BCRC 17059 / LMG 24140 / F1)).